The following is a 466-amino-acid chain: MTEVLHFPSSPSASHSSSSSSSSPSPSSLSYASRSNATLLISSDHNRRNPVARFDQDVDFHASIEEQDLRRRSSTDGGEEDDGGEDQISLLALLVAIFRRSLISCKSNRRELCSMEIGWPTNVRHVAHVTFDRFNGFLGLPVEFEPEVPRRAPSASATVFGVSTESMQLSYDSRGNCVPTILLLMQNCLYSQGGLQAEGIFRLTAENSEEEAVREQLNRGFIPERIDVHCLAGLIKAWFRELPTSVLDSLSPEQVMQCQTEEENVELVRLLPPTEAALLDWAINLMADVVQYEHLNKMNSRNIAMVFAPNMTQMDDPLTALMYAVQVMNFLKTLIEKTLRERQDSVVEQAHAFPLEPSDESGHQSPSQSLAFNTSEQSEETQSDNIENAENQSSSSEISDELTLENNACEQRETDFGKYRTGRLSDSSQQVVLNLDPPAQWPVGRTKGLTNLSRVGSRVERTEAWR.

Disordered stretches follow at residues 1–31 (MTEVLHFPSSPSASHSSSSSSSSPSPSSLSY) and 65–84 (EEQDLRRRSSTDGGEEDDGG). The span at 8 to 31 (PSSPSASHSSSSSSSSPSPSSLSY) shows a compositional bias: low complexity. The segment covering 65–74 (EEQDLRRRSS) has biased composition (basic and acidic residues). The 14-residue stretch at 117-130 (IGWPTNVRHVAHVT) folds into the CRIB domain. Residues 162–342 (VSTESMQLSY…TLIEKTLRER (181 aa)) form the Rho-GAP domain. The disordered stretch occupies residues 354-402 (PLEPSDESGHQSPSQSLAFNTSEQSEETQSDNIENAENQSSSSEISDEL). Polar residues-rich tracts occupy residues 363–376 (HQSPSQSLAFNTSE) and 383–397 (SDNIENAENQSSSSE).

Its function is as follows. Acts as a GTPase activator for the Rac-type GTPase by converting it to an inactive GDP-bound state. This is Rho GTPase-activating protein 1 (ROPGAP1) from Arabidopsis thaliana (Mouse-ear cress).